The following is a 700-amino-acid chain: Acyl-coenzyme A oxidase 2 (700 aa).

It belongs to the acyl-CoA oxidase family. As to quaternary structure, heteropentamer composed of five different subunits. FAD serves as cofactor.

The protein localises to the peroxisome. It carries out the reaction a 2,3-saturated acyl-CoA + O2 = a (2E)-enoyl-CoA + H2O2. It functions in the pathway lipid metabolism; peroxisomal fatty acid beta-oxidation. In terms of biological role, oxidizes strain chain acyl-CoAs with a chain length of 10 to 14 carbons. Also active toward the 2S isomers of acyl-CoA-esters containing a 2-methyl group. The sequence is that of Acyl-coenzyme A oxidase 2 (POX2) from Yarrowia lipolytica (strain CLIB 122 / E 150) (Yeast).